The following is a 551-amino-acid chain: Nose resistant to fluoxetine protein 5 (551 aa).

The signal sequence occupies residues 1–20 (MSRNFHIFFLLVSIIQVGNS). A disulfide bridge connects residues cysteine 151 and cysteine 232. The tract at residues 241-265 (EDSEQEEGNVETTVAPTPDDDNSTL) is disordered.

It belongs to the BPI/LBP/Plunc superfamily. BPI/LBP family. As to quaternary structure, interacts with ttr-52. In terms of tissue distribution, expressed in the body wall muscle cells and detected at the basal surface of pharyngeal cells and basal-lateral membranes of the intestine.

The protein resides in the secreted. In terms of biological role, plays a role in the uptake of a range of molecules including phosphatidylserine, lipids and xenobiotic compounds from the intestine to surrounding tissues. Possesses lipid transfer activity. Mediates transport of lipids from intestine to reproductive tract. Binds phosphatidylserine. Plays a role in efficient clearance of cell corpses by mediating phosphatidylserine appearance on phagocytic cells, thus promoting phagocytic engulfment of apoptotic cells. Vital for embryonic development. The protein is Nose resistant to fluoxetine protein 5 of Caenorhabditis elegans.